Reading from the N-terminus, the 265-residue chain is 3-methyl-2-oxobutanoate hydroxymethyltransferase (265 aa).

Positions 45 and 84 each coordinate Mg(2+). 3-methyl-2-oxobutanoate is bound by residues 45 to 46 (DS), aspartate 84, and lysine 112. Glutamate 114 contributes to the Mg(2+) binding site. The active-site Proton acceptor is the glutamate 181.

The protein belongs to the PanB family. In terms of assembly, homodecamer; pentamer of dimers. Mg(2+) serves as cofactor.

Its subcellular location is the cytoplasm. The catalysed reaction is 3-methyl-2-oxobutanoate + (6R)-5,10-methylene-5,6,7,8-tetrahydrofolate + H2O = 2-dehydropantoate + (6S)-5,6,7,8-tetrahydrofolate. Its pathway is cofactor biosynthesis; (R)-pantothenate biosynthesis; (R)-pantoate from 3-methyl-2-oxobutanoate: step 1/2. In terms of biological role, catalyzes the reversible reaction in which hydroxymethyl group from 5,10-methylenetetrahydrofolate is transferred onto alpha-ketoisovalerate to form ketopantoate. In Pseudoalteromonas atlantica (strain T6c / ATCC BAA-1087), this protein is 3-methyl-2-oxobutanoate hydroxymethyltransferase.